Consider the following 350-residue polypeptide: Probable dual-specificity RNA methyltransferase RlmN (350 aa).

Positions 105-342 (ANGKNSVCIS…VRQSKGANIN (238 aa)) constitute a Radical SAM core domain. An intrachain disulfide couples cysteine 112 to cysteine 345. Positions 119, 123, and 126 each coordinate [4Fe-4S] cluster. S-adenosyl-L-methionine is bound by residues 166-167 (GE), serine 198, 221-223 (SLH), and asparagine 302. Cysteine 345 functions as the S-methylcysteine intermediate in the catalytic mechanism.

Belongs to the radical SAM superfamily. RlmN family. [4Fe-4S] cluster is required as a cofactor.

It localises to the cytoplasm. The catalysed reaction is adenosine(2503) in 23S rRNA + 2 reduced [2Fe-2S]-[ferredoxin] + 2 S-adenosyl-L-methionine = 2-methyladenosine(2503) in 23S rRNA + 5'-deoxyadenosine + L-methionine + 2 oxidized [2Fe-2S]-[ferredoxin] + S-adenosyl-L-homocysteine. It catalyses the reaction adenosine(37) in tRNA + 2 reduced [2Fe-2S]-[ferredoxin] + 2 S-adenosyl-L-methionine = 2-methyladenosine(37) in tRNA + 5'-deoxyadenosine + L-methionine + 2 oxidized [2Fe-2S]-[ferredoxin] + S-adenosyl-L-homocysteine. In terms of biological role, specifically methylates position 2 of adenine 2503 in 23S rRNA and position 2 of adenine 37 in tRNAs. This chain is Probable dual-specificity RNA methyltransferase RlmN, found in Endomicrobium trichonymphae.